The primary structure comprises 503 residues: MAHEGPRQVRDRGMTRSKAEKVRPPTVPVPQVDIVPGRLTEAEWIAFTALEEGEDVVGDILADLVARVIDSAFKVYLTQQCIPFTISQAREAMLQITEWRFLARDEGESAVAEDPTWGEDEEPLACTTDAWAQGSVPVLHARASMGLEETFQGEDQDSVDQIPLGGSWKDSGSQEPMESWELTVTPDSPPTPELLQETGPRSPLEKLGDQSRSDQTDLFAVGSSNSSSQLSMEMVPAGSTHASLELSLVASPQASVERAQPISSQFSLEDLYNCTPQPHAAGDRLELREEKVPLIPSRVLVSDPSAGGPTTLNPSAGFQPQPPWLAEERPSALHSRIGRMGTTARLDPARLPRPDMARSPSPKLWPGAKWPSGWEGEAELLGELWAGRTRVPPQGLDLGDRESQDPHQYRHPVPQVLEATSQVTWKPVLLPGALKLAPGVSMWNPSTQVLLSSSEPQRNDREGSASPPIHTGAPKPQVTVAQLMNSALKMWSLPSKRLPNSKP.

Basic and acidic residues-rich tracts occupy residues 1-23 (MAHE…EKVR) and 203-215 (PLEK…RSDQ). 2 disordered regions span residues 1–29 (MAHE…TVPV) and 149–227 (ETFQ…SNSS). Residues Ser-239 and Ser-243 each carry the phosphoserine modification. Disordered regions lie at residues 346-370 (LDPA…GAKW) and 450-475 (LLSS…GAPK). Positions 347-356 (DPARLPRPDM) are enriched in basic and acidic residues.

This is an uncharacterized protein from Bos taurus (Bovine).